We begin with the raw amino-acid sequence, 654 residues long: DNA-directed RNA polymerase III subunit RPC3 (654 aa).

Thr27 bears the Phosphothreonine mark. 2 disordered regions span residues 381–401 and 422–448; these read LSRK…ASLP and KSLQ…EDPH. A phosphoserine mark is found at Ser392 and Ser394. Positions 429–444 are enriched in acidic residues; sequence DTQEEDEEEEDLDADT. Residues 581-602 are leucine-zipper; it reads LEWNMANLLFKKEKLKQENSTL.

Belongs to the eukaryotic RPC3/POLR3C RNA polymerase subunit family. In terms of assembly, component of the RNA polymerase III (Pol III) complex consisting of 17 subunits.

The protein localises to the cytoplasm. Its subcellular location is the nucleus. Functionally, DNA-dependent RNA polymerase catalyzes the transcription of DNA into RNA using the four ribonucleoside triphosphates as substrates. Specific core component of RNA polymerase III which synthesizes small RNAs, such as 5S rRNA and tRNAs. In Saccharomyces cerevisiae (strain ATCC 204508 / S288c) (Baker's yeast), this protein is DNA-directed RNA polymerase III subunit RPC3 (RPC82).